The sequence spans 151 residues: SsrA-binding protein (151 aa).

The protein belongs to the SmpB family.

It localises to the cytoplasm. Required for rescue of stalled ribosomes mediated by trans-translation. Binds to transfer-messenger RNA (tmRNA), required for stable association of tmRNA with ribosomes. tmRNA and SmpB together mimic tRNA shape, replacing the anticodon stem-loop with SmpB. tmRNA is encoded by the ssrA gene; the 2 termini fold to resemble tRNA(Ala) and it encodes a 'tag peptide', a short internal open reading frame. During trans-translation Ala-aminoacylated tmRNA acts like a tRNA, entering the A-site of stalled ribosomes, displacing the stalled mRNA. The ribosome then switches to translate the ORF on the tmRNA; the nascent peptide is terminated with the 'tag peptide' encoded by the tmRNA and targeted for degradation. The ribosome is freed to recommence translation, which seems to be the essential function of trans-translation. In Chlamydia pneumoniae (Chlamydophila pneumoniae), this protein is SsrA-binding protein.